Consider the following 346-residue polypeptide: Protein RecA (346 aa).

67 to 74 (GPESSGKT) provides a ligand contact to ATP.

This sequence belongs to the RecA family.

It localises to the cytoplasm. Its function is as follows. Can catalyze the hydrolysis of ATP in the presence of single-stranded DNA, the ATP-dependent uptake of single-stranded DNA by duplex DNA, and the ATP-dependent hybridization of homologous single-stranded DNAs. It interacts with LexA causing its activation and leading to its autocatalytic cleavage. This chain is Protein RecA, found in Mycobacteroides abscessus (strain ATCC 19977 / DSM 44196 / CCUG 20993 / CIP 104536 / JCM 13569 / NCTC 13031 / TMC 1543 / L948) (Mycobacterium abscessus).